Here is a 352-residue protein sequence, read N- to C-terminus: Peptide chain release factor 1 (352 aa).

The residue at position 233 (Gln-233) is an N5-methylglutamine. Residues 288–309 form a disordered region; that stretch reads NAKDRKEQVGSGDRSERIRTYN. The span at 289-306 shows a compositional bias: basic and acidic residues; the sequence is AKDRKEQVGSGDRSERIR.

The protein belongs to the prokaryotic/mitochondrial release factor family. In terms of processing, methylated by PrmC. Methylation increases the termination efficiency of RF1.

The protein localises to the cytoplasm. In terms of biological role, peptide chain release factor 1 directs the termination of translation in response to the peptide chain termination codons UAG and UAA. This Helicobacter pylori (strain HPAG1) protein is Peptide chain release factor 1.